A 119-amino-acid chain; its full sequence is MLDKKARIRTSREYRNVFEKGKRLSGRFLIIYYVENALDNNRFGFITNKKIGMAVIRNRIKRQLRAIVREYQGQVKNKHDIVLVARAGIGKSSFEGMEKDYIAIMKKAGLFARNANKID.

Belongs to the RnpA family. Consists of a catalytic RNA component (M1 or rnpB) and a protein subunit.

It catalyses the reaction Endonucleolytic cleavage of RNA, removing 5'-extranucleotides from tRNA precursor.. Its function is as follows. RNaseP catalyzes the removal of the 5'-leader sequence from pre-tRNA to produce the mature 5'-terminus. It can also cleave other RNA substrates such as 4.5S RNA. The protein component plays an auxiliary but essential role in vivo by binding to the 5'-leader sequence and broadening the substrate specificity of the ribozyme. The protein is Ribonuclease P protein component of Syntrophomonas wolfei subsp. wolfei (strain DSM 2245B / Goettingen).